The following is a 259-amino-acid chain: Short-chain dehydrogenase reductase 5 (259 aa).

12–36 serves as a coordination point for NAD(+); sequence IITGGASGIGAEAARLFTDHGAKVV. Residue S144 participates in substrate binding. Residue Y157 is the Proton acceptor of the active site.

It belongs to the short-chain dehydrogenases/reductases (SDR) family.

This chain is Short-chain dehydrogenase reductase 5 (SDR5), found in Arabidopsis thaliana (Mouse-ear cress).